A 563-amino-acid polypeptide reads, in one-letter code: Probable ATP-dependent RNA helicase ddx51 (563 aa).

Positions asparagine 15 to glutamine 43 match the Q motif motif. The Helicase ATP-binding domain occupies phenylalanine 48–phenylalanine 276. Alanine 61–threonine 68 serves as a coordination point for ATP. The short motif at aspartate 179 to aspartate 182 is the DEAD box element. Positions leucine 308–arginine 482 constitute a Helicase C-terminal domain. Residues isoleucine 493–phenylalanine 537 form a disordered region. Residues aspartate 495 to glutamate 510 show a composition bias toward acidic residues. Positions asparagine 520–asparagine 536 are enriched in low complexity.

The protein belongs to the DEAD box helicase family. DDX51/DBP6 subfamily.

It localises to the nucleus. Its subcellular location is the nucleolus. The enzyme catalyses ATP + H2O = ADP + phosphate + H(+). Its function is as follows. Probable ATP-binding RNA helicase which may be involved in ribosome biogenesis. This is Probable ATP-dependent RNA helicase ddx51 (ddx51) from Dictyostelium discoideum (Social amoeba).